The sequence spans 562 residues: Serine palmitoyltransferase 2 (562 aa).

Residues 61–81 (LITYLNYLILIILGHIHDFLG) traverse the membrane as a helical segment. N6-(pyridoxal phosphate)lysine is present on Lys365.

The protein belongs to the class-II pyridoxal-phosphate-dependent aminotransferase family. Pyridoxal 5'-phosphate is required as a cofactor.

Its subcellular location is the membrane. The catalysed reaction is L-serine + hexadecanoyl-CoA + H(+) = 3-oxosphinganine + CO2 + CoA. Its pathway is lipid metabolism; sphingolipid metabolism. In Kluyveromyces lactis (strain ATCC 8585 / CBS 2359 / DSM 70799 / NBRC 1267 / NRRL Y-1140 / WM37) (Yeast), this protein is Serine palmitoyltransferase 2 (LCB2).